The following is a 121-amino-acid chain: Large ribosomal subunit protein uL22 (121 aa).

It belongs to the universal ribosomal protein uL22 family. As to quaternary structure, part of the 50S ribosomal subunit.

Functionally, this protein binds specifically to 23S rRNA; its binding is stimulated by other ribosomal proteins, e.g. L4, L17, and L20. It is important during the early stages of 50S assembly. It makes multiple contacts with different domains of the 23S rRNA in the assembled 50S subunit and ribosome. Its function is as follows. The globular domain of the protein is located near the polypeptide exit tunnel on the outside of the subunit, while an extended beta-hairpin is found that lines the wall of the exit tunnel in the center of the 70S ribosome. The polypeptide is Large ribosomal subunit protein uL22 (Hydrogenobaculum sp. (strain Y04AAS1)).